The following is a 111-amino-acid chain: Shuttling pre-60S factor C23B6.02c (111 aa).

2 stretches are compositionally biased toward basic residues: residues 1–12 (MAKKQSIRSRNF) and 59–73 (SKKK…KKAK). Disordered stretches follow at residues 1 to 25 (MAKK…DSST) and 47 to 111 (ALRS…QGDE). Positions 83–111 (QAREERLDTKISKSLQKQEKLKARKQGDE) are enriched in basic and acidic residues.

This sequence belongs to the ECM1 family. In terms of assembly, associates with the pre-60S ribosomal particle and the nucleopore complex.

The protein localises to the nucleus. It is found in the nucleolus. The protein resides in the cytoplasm. Functionally, pre-ribosomal factor involved in 60S ribosomal protein subunit export from the nucleus. This is Shuttling pre-60S factor C23B6.02c from Schizosaccharomyces pombe (strain 972 / ATCC 24843) (Fission yeast).